Consider the following 296-residue polypeptide: MNLKSPLFLRLSDRLDVYIRLMRADKPIGTLLLLWPTYWALWLASDGIPDLAVLAAFTIGTFLMRSAGCVINDFADRDFDGAVERTKNRPFAQGRVKKKEALLLTAFLCLLAALCLIPLNHLTWLMSLPALFLALTYPFTKRFFPIPQFYLGLAFSFGIPMAFAAVGNSVPVEAWILFAANVLWTLAYDTVYAMADKEDDLKIGIKTSAVTFGRYDIAAVMLCHGGFTLLMAVLGAVIGAAWAYWTAIPIVLLLQYRQYAAIKSRVRQICFETFLANNRIGWVWFAAIFAHTFFAK.

The next 8 helical transmembrane spans lie at isoleucine 28 to isoleucine 48, leucine 51 to isoleucine 71, leucine 102 to leucine 122, phenylalanine 143 to phenylalanine 163, alanine 174 to methionine 194, phenylalanine 212 to alanine 232, valine 233 to leucine 253, and phenylalanine 274 to phenylalanine 294.

The protein belongs to the UbiA prenyltransferase family. Mg(2+) serves as cofactor.

The protein localises to the cell inner membrane. It catalyses the reaction all-trans-octaprenyl diphosphate + 4-hydroxybenzoate = 4-hydroxy-3-(all-trans-octaprenyl)benzoate + diphosphate. Its pathway is cofactor biosynthesis; ubiquinone biosynthesis. In terms of biological role, catalyzes the prenylation of para-hydroxybenzoate (PHB) with an all-trans polyprenyl group. Mediates the second step in the final reaction sequence of ubiquinone-8 (UQ-8) biosynthesis, which is the condensation of the polyisoprenoid side chain with PHB, generating the first membrane-bound Q intermediate 3-octaprenyl-4-hydroxybenzoate. The polypeptide is 4-hydroxybenzoate octaprenyltransferase (Neisseria gonorrhoeae (strain NCCP11945)).